Here is a 372-residue protein sequence, read N- to C-terminus: MRSIIADSKRLVVKVGSSLVTNDGKGLDHAAIGRWAAQIAALRAQGKEVVLVSSGAIAEGMQRLGWNKRPREIDELQAAAAVGQMGLAQVYESRFTEHHIRTAQILLTHADLADRERYLNARSTLLTLLRLGVVPIINENDTVVTDEIKFGDNDTLGALVANLIEGDALIILTDQTGLFTADPRKDPNATLVAEASAGAPELESMAGGAGSSLGRGGMLTKILAAKRAAHSGANTVIASGREADVLVRLAAGEAIGTQLIARTARMAARKQWMADHLQVRGHVVIDAGAVEKLRDGGKSLLPIGVIDVQGAFARGEVIACVGPDGREVARGLTNYSSAETKLIHRKPSGEIETVLGYMLEPELIHRDNLVLV.

Residue Lys-14 participates in ATP binding. The substrate site is built by Ser-54, Asp-141, and Asn-153. 173–174 (TD) serves as a coordination point for ATP. The region spanning 280–358 (RGHVVIDAGA…GEIETVLGYM (79 aa)) is the PUA domain.

Belongs to the glutamate 5-kinase family.

Its subcellular location is the cytoplasm. It carries out the reaction L-glutamate + ATP = L-glutamyl 5-phosphate + ADP. The protein operates within amino-acid biosynthesis; L-proline biosynthesis; L-glutamate 5-semialdehyde from L-glutamate: step 1/2. Functionally, catalyzes the transfer of a phosphate group to glutamate to form L-glutamate 5-phosphate. The polypeptide is Glutamate 5-kinase (Burkholderia vietnamiensis (strain G4 / LMG 22486) (Burkholderia cepacia (strain R1808))).